Here is a 223-residue protein sequence, read N- to C-terminus: Proteasome subunit beta (223 aa).

Residues 1–6 (MDTMKG) constitute a propeptide, removed in mature form; by autocatalysis. The Nucleophile role is filled by Thr-7.

Belongs to the peptidase T1B family. As to quaternary structure, the 20S proteasome core is composed of 14 alpha and 14 beta subunits that assemble into four stacked heptameric rings, resulting in a barrel-shaped structure. The two inner rings, each composed of seven catalytic beta subunits, are sandwiched by two outer rings, each composed of seven alpha subunits. The catalytic chamber with the active sites is on the inside of the barrel. Has a gated structure, the ends of the cylinder being occluded by the N-termini of the alpha-subunits. Is capped at one or both ends by the proteasome regulatory ATPase, PAN.

It is found in the cytoplasm. The catalysed reaction is Cleavage of peptide bonds with very broad specificity.. Its activity is regulated as follows. The formation of the proteasomal ATPase PAN-20S proteasome complex, via the docking of the C-termini of PAN into the intersubunit pockets in the alpha-rings, triggers opening of the gate for substrate entry. Interconversion between the open-gate and close-gate conformations leads to a dynamic regulation of the 20S proteasome proteolysis activity. Its function is as follows. Component of the proteasome core, a large protease complex with broad specificity involved in protein degradation. The chain is Proteasome subunit beta from Methanocaldococcus vulcanius (strain ATCC 700851 / DSM 12094 / M7) (Methanococcus vulcanius).